The chain runs to 908 residues: Translation initiation factor IF-2 (908 aa).

The segment at 145 to 312 is disordered; sequence EIPGLTQRAK…KGKKRQAEKI (168 aa). Residues 167–177 are compositionally biased toward basic and acidic residues; sequence VVERPEARPSA. 2 stretches are compositionally biased toward low complexity: residues 194–217 and 263–276; these read RPEG…PRPG and VAGA…GAAV. Residues 278-296 show a composition bias toward basic and acidic residues; it reads KRKEEFKKTELFEKHERVF. Residues 408–577 form the tr-type G domain; that stretch reads KRPPVVTIMG…LLQADVLELK (170 aa). A G1 region spans residues 417–424; it reads GHVDHGKT. 417 to 424 contributes to the GTP binding site; it reads GHVDHGKT. The tract at residues 442 to 446 is G2; it reads GITQH. The G3 stretch occupies residues 463–466; sequence DTPG. Residues 463 to 467 and 517 to 520 contribute to the GTP site; these read DTPGH and NKID. Residues 517 to 520 are G4; it reads NKID. The tract at residues 553–555 is G5; sequence SAK.

Belongs to the TRAFAC class translation factor GTPase superfamily. Classic translation factor GTPase family. IF-2 subfamily.

It localises to the cytoplasm. Functionally, one of the essential components for the initiation of protein synthesis. Protects formylmethionyl-tRNA from spontaneous hydrolysis and promotes its binding to the 30S ribosomal subunits. Also involved in the hydrolysis of GTP during the formation of the 70S ribosomal complex. This is Translation initiation factor IF-2 from Geotalea daltonii (strain DSM 22248 / JCM 15807 / FRC-32) (Geobacter daltonii).